The following is a 688-amino-acid chain: Protein adenylyltransferase SelO, mitochondrial (688 aa).

The transit peptide at 1–23 directs the protein to the mitochondrion; it reads MGEKRTIIKALKNSAASHFIKKL. 8 residues coordinate ATP: Gly-132, Gly-134, Arg-135, Lys-156, Asp-168, Gly-169, Arg-220, and Arg-227. Asp-338 (proton acceptor) is an active-site residue. Positions 339 and 348 each coordinate Mg(2+). Asp-348 is a binding site for ATP.

Belongs to the SELO family. The cofactor is Mg(2+). Post-translationally, forms probably one or more intrachain disulfide bridges.

The protein resides in the mitochondrion. It carries out the reaction L-tyrosyl-[protein] + ATP = O-(5'-adenylyl)-L-tyrosyl-[protein] + diphosphate. Its function is as follows. Catalyzes the transfer of adenosine 5'-monophosphate (AMP) to Tyr residues of target mitochondrial proteins (AMPylation). Involved in redox homeostasis by regulating the cellular response to oxidative stress. Regulates protein S-glutathionylation levels possibly by AMPylation of deglutathionylation enzymes such as glutaredoxins. In Saccharomyces cerevisiae (strain ATCC 204508 / S288c) (Baker's yeast), this protein is Protein adenylyltransferase SelO, mitochondrial.